We begin with the raw amino-acid sequence, 236 residues long: CO-responsive transcriptional regulator RcoM (236 aa).

A PAS domain is found at 1–64; it reads MDDFAYNLRR…PLRPKVAVLL (64 aa). His52 is a binding site for heme. An HTH LytTR-type domain is found at 131 to 236; sequence VPLGLGETTE…VTRLRGLLAI (106 aa).

Requires heme as cofactor.

Activates the expression of the CowN protein in response to carbon monoxide (CO). Is required to sustain N(2)-dependent growth in the presence of low levels of carbon monoxide (CO). This Rhodospirillum rubrum (strain ATCC 11170 / ATH 1.1.1 / DSM 467 / LMG 4362 / NCIMB 8255 / S1) protein is CO-responsive transcriptional regulator RcoM (rcoM).